The sequence spans 517 residues: Maturase K (517 aa).

The protein belongs to the intron maturase 2 family. MatK subfamily.

It localises to the plastid. It is found in the chloroplast. Functionally, usually encoded in the trnK tRNA gene intron. Probably assists in splicing its own and other chloroplast group II introns. This Phalaenopsis japonica (Orchid) protein is Maturase K.